The chain runs to 781 residues: AP-3 complex subunit beta (781 aa).

5 HEAT repeats span residues 113–151 (PNLA…ASLY), 153–186 (IILH…EQGI), 187–224 (SIKD…QELQ), 294–332 (DHDL…PKTF), and 521–559 (PRIC…HDVD). Disordered stretches follow at residues 694–713 (KPKR…TSSH) and 731–781 (ARQS…ETTE). The span at 699–712 (ASVSSVPSNTFTSS) shows a compositional bias: polar residues. A compositionally biased stretch (acidic residues) spans 746–758 (STSEETDHTDDES). Over residues 759–774 (GSSSGDESTESSYVSS) the composition is skewed to low complexity.

The protein belongs to the adaptor complexes large subunit family. In terms of assembly, adaptor protein complex 3 (AP-3) is a heterotetramer composed of 2 large adaptins (APL5 and APL6), a medium adaptin (APM3) and a small adaptin (APS3).

The protein localises to the golgi apparatus. It localises to the cytoplasmic vesicle. It is found in the clathrin-coated vesicle membrane. In terms of biological role, part of the AP-3 complex, an adaptor-related complex which is not clathrin-associated. The complex is associated with the Golgi region as well as more peripheral structures. It facilitates the budding of vesicles from the Golgi membrane and may be directly involved in trafficking to the vacuole. This Eremothecium gossypii (strain ATCC 10895 / CBS 109.51 / FGSC 9923 / NRRL Y-1056) (Yeast) protein is AP-3 complex subunit beta (APL6).